A 128-amino-acid polypeptide reads, in one-letter code: Large ribosomal subunit protein bL12 (128 aa).

The protein belongs to the bacterial ribosomal protein bL12 family. As to quaternary structure, homodimer. Part of the ribosomal stalk of the 50S ribosomal subunit. Forms a multimeric L10(L12)X complex, where L10 forms an elongated spine to which 2 to 4 L12 dimers bind in a sequential fashion. Binds GTP-bound translation factors.

Functionally, forms part of the ribosomal stalk which helps the ribosome interact with GTP-bound translation factors. Is thus essential for accurate translation. The chain is Large ribosomal subunit protein bL12 from Corynebacterium glutamicum (strain R).